A 341-amino-acid polypeptide reads, in one-letter code: MAQITAKLVKELRERTGAGVMDAKKALVEVDGDMDKAIQYLRDKGMAKAAKKADRVAAEGLTGVYVNGNVAAITEVNSETDFVSSNDKFVNLVKDATKTIAEGQPADMEAAKKLKMDDGSTLDQAFVNATATIGEKIVLRRFALEKKNDDQEFGAYQHNGGQIGVITVLEGADAATAKHLAMHIAAMKPKVISPEELDDQFITDQLAVMNHKIDQDNESRALVHKKPLPHLVYGSEKQLTDDVLAKAKEDIKAELKEEGKPEKIWDRIIPGKMQRFIDDNTQVDKHFAVLSQDYIMDDSKTVGEFLKEKGAKLVAFQRFEVGEGIEKKQEDFAAEVREQMK.

Residues 80 to 83 form an involved in Mg(2+) ion dislocation from EF-Tu region; it reads TDFV.

Belongs to the EF-Ts family.

It is found in the cytoplasm. Associates with the EF-Tu.GDP complex and induces the exchange of GDP to GTP. It remains bound to the aminoacyl-tRNA.EF-Tu.GTP complex up to the GTP hydrolysis stage on the ribosome. This chain is Elongation factor Ts, found in Lactobacillus helveticus (strain DPC 4571).